The following is a 71-amino-acid chain: DNA gyrase inhibitor YacG (71 aa).

Zn(2+) contacts are provided by Cys8, Cys11, Cys27, and Cys31. A disordered region spans residues 48-71 (VVEDDDLPPDAPGGESGGASGRLN). The span at 61 to 71 (GESGGASGRLN) shows a compositional bias: gly residues.

This sequence belongs to the DNA gyrase inhibitor YacG family. As to quaternary structure, interacts with GyrB. Zn(2+) is required as a cofactor.

Functionally, inhibits all the catalytic activities of DNA gyrase by preventing its interaction with DNA. Acts by binding directly to the C-terminal domain of GyrB, which probably disrupts DNA binding by the gyrase. The protein is DNA gyrase inhibitor YacG of Ralstonia nicotianae (strain ATCC BAA-1114 / GMI1000) (Ralstonia solanacearum).